A 240-amino-acid polypeptide reads, in one-letter code: Probable ATP synthase 24 kDa subunit, mitochondrial (240 aa).

A mitochondrion-targeting transit peptide spans 1–32; sequence MAYASRFLSRSKQLQGGLVILQQQHAIPVRAF. Basic and acidic residues-rich tracts occupy residues 210–222 and 229–240; these read AVEA…KKEE and PDVKSLDIRNFI. The tract at residues 210–240 is disordered; sequence AVEAMESQKKKEEFQDEEMPDVKSLDIRNFI.

It localises to the mitochondrion. The protein localises to the mitochondrion inner membrane. Mitochondrial membrane ATP synthase (F(1)F(0) ATP synthase or Complex V) produces ATP from ADP in the presence of a proton gradient across the membrane which is generated by electron transport complexes of the respiratory chain. F-type ATPases consist of two structural domains, F(1) - containing the extramembraneous catalytic core and F(0) - containing the membrane proton channel, linked together by a central stalk and a peripheral stalk. During catalysis, ATP synthesis in the catalytic domain of F(1) is coupled via a rotary mechanism of the central stalk subunits to proton translocation. Part of the complex F(0) domain. This Arabidopsis thaliana (Mouse-ear cress) protein is Probable ATP synthase 24 kDa subunit, mitochondrial.